The primary structure comprises 122 residues: Large ribosomal subunit protein uL18 (122 aa).

Belongs to the universal ribosomal protein uL18 family. Part of the 50S ribosomal subunit; part of the 5S rRNA/L5/L18/L25 subcomplex. Contacts the 5S and 23S rRNAs.

Its function is as follows. This is one of the proteins that bind and probably mediate the attachment of the 5S RNA into the large ribosomal subunit, where it forms part of the central protuberance. The sequence is that of Large ribosomal subunit protein uL18 from Thermotoga neapolitana (strain ATCC 49049 / DSM 4359 / NBRC 107923 / NS-E).